An 81-amino-acid chain; its full sequence is ATP synthase subunit C, cyanelle (81 aa).

The next 2 membrane-spanning stretches (helical) occupy residues 7–27 and 57–77; these read AASVIAAALAVGLAAIGPGIG and LAFMEALTIYGLVVALALLFA.

This sequence belongs to the ATPase C chain family. F-type ATPases have 2 components, F(1) - the catalytic core - and F(0) - the membrane proton channel. F(1) has five subunits: alpha(3), beta(3), gamma(1), delta(1), epsilon(1). F(0) has four main subunits: a(1), b(1), b'(1) and c(10-14). The alpha and beta chains form an alternating ring which encloses part of the gamma chain. F(1) is attached to F(0) by a central stalk formed by the gamma and epsilon chains, while a peripheral stalk is formed by the delta, b and b' chains.

Its subcellular location is the plastid. The protein resides in the cyanelle thylakoid membrane. Functionally, f(1)F(0) ATP synthase produces ATP from ADP in the presence of a proton or sodium gradient. F-type ATPases consist of two structural domains, F(1) containing the extramembraneous catalytic core and F(0) containing the membrane proton channel, linked together by a central stalk and a peripheral stalk. During catalysis, ATP synthesis in the catalytic domain of F(1) is coupled via a rotary mechanism of the central stalk subunits to proton translocation. Key component of the F(0) channel; it plays a direct role in translocation across the membrane. A homomeric c-ring of between 10-14 subunits forms the central stalk rotor element with the F(1) delta and epsilon subunits. This is ATP synthase subunit C, cyanelle from Cyanophora paradoxa.